Reading from the N-terminus, the 662-residue chain is Protein distal antenna (662 aa).

The region spanning 21-72 (TKGKRPLRHLTATDKIDAIQRIHDGESKASVARDIGVPESTLRGWCKNEEKL) is the HTH psq-type domain. The segment at residues 48–68 (KASVARDIGVPESTLRGWCKN) is a DNA-binding region (H-T-H motif). Disordered stretches follow at residues 265-299 (RNAR…STPS), 348-407 (YSQM…PEDT), 491-537 (PEDL…DDEV), and 558-596 (QSSP…KSTC). Residues 349–391 (SQMPRPSSPQQPQSTPPTTTTTQQQQPQSSTPPTATPPIVSTP) are compositionally biased toward low complexity. A compositionally biased stretch (polar residues) spans 511–520 (FNPSPSTSIK). Positions 527 to 536 (VDEDEDEDDE) are enriched in acidic residues.

In terms of assembly, homomers. Interacts with itself, danr, ey and dac to form a complex (or complexes) containing the RD factors.

It is found in the nucleus. Functionally, probable transcription factor with a role in the retinal determination (RD) network. Contributes to differentiation of antenna-specific characteristics. This chain is Protein distal antenna, found in Culex quinquefasciatus (Southern house mosquito).